A 227-amino-acid chain; its full sequence is Ubiquitin domain-containing protein 1 (227 aa).

Residues 1 to 14 show a composition bias toward basic and acidic residues; that stretch reads MGGCVGRERAETRG. The segment at 1–45 is disordered; sequence MGGCVGRERAETRGRGSRTQRKRGGRNEPLKKDKPKWKSDYPMTE. Basic residues predominate over residues 15-24; it reads RGSRTQRKRG. Basic and acidic residues predominate over residues 25-39; sequence GRNEPLKKDKPKWKS. Residues 150–225 form the Ubiquitin-like domain; the sequence is FQLKVRLSTG…IQVIVNQPAP (76 aa).

Functionally, may be involved in the regulation of cellular senescence through a positive feedback loop with TP53. The polypeptide is Ubiquitin domain-containing protein 1 (ubtd1) (Danio rerio (Zebrafish)).